Here is a 206-residue protein sequence, read N- to C-terminus: Large ribosomal subunit protein uL4 (206 aa).

Belongs to the universal ribosomal protein uL4 family. Part of the 50S ribosomal subunit.

Functionally, one of the primary rRNA binding proteins, this protein initially binds near the 5'-end of the 23S rRNA. It is important during the early stages of 50S assembly. It makes multiple contacts with different domains of the 23S rRNA in the assembled 50S subunit and ribosome. Its function is as follows. Forms part of the polypeptide exit tunnel. The polypeptide is Large ribosomal subunit protein uL4 (Methylorubrum extorquens (strain CM4 / NCIMB 13688) (Methylobacterium extorquens)).